The sequence spans 62 residues: Delta-theraphotoxin-Cg1a 1 (62 aa).

Positions Met1–Ala21 are cleaved as a signal peptide. Residues Thr22–Arg29 constitute a propeptide that is removed on maturation. 3 cysteine pairs are disulfide-bonded: Cys31–Cys46, Cys38–Cys51, and Cys45–Cys58.

The protein belongs to the neurotoxin 10 (Hwtx-1) family. 33 (Jztx-1) subfamily. Expressed by the venom gland.

It localises to the secreted. In terms of biological role, inhibits voltage-gated sodium channels, preferentially subtype Nav1.5/SCN5A (in cardiac myocytes), but also Nav1.6/SCN8A and Nav1.7/SCN9A (TTX-sensitive Nav in rat DRG neurons) and invertebrate Nav (in insect neurons) as well as voltage-gated potassium channels of the subtype Kv2.1/KCNB1. Is suggested to bind to site 3 of the sodium channels and inhibit the inactivation of the activated channels, thereby blocking neuronal transmission. On potassium channels, inhibits activation of channels with an IC(50) of 8.05 uM through a voltage sensor-trapping mechanism. Increases muscle contraction in several assays (mouse phrenic nerve-diaphragm, toad heart, rat vas deferens) and is suggested to act both presynaptically and postsynaptically. Functionally, moderately inhibits voltage-gated sodium channels and weakly inhibits voltage-gated potassium channel. Inhibits the inactivation of rat Nav1.2/SCN2A (IC(50)=870 nM), rat Nav1.3/SCN3A (IC(50)=845 nM), rat Nav1.4/SCN4A (IC(50)=339 nM), human Nav1.5/SCN5A (IC(50)=335 nM) and human Nav1.7/SCN9A sodium channels (IC(50)=348 nM). The toxin delays the inactivation of sodium channels without affecting the activation and steady-state inactivation kinetics in the physiological range of voltages. Site-directed mutagenesis of the sodium channel indicates that the toxin interacts with site 3 located at the extracellular S3-S4 linker of domain IV. On potassium channels, it inhibits activation of channels with an IC(50) of 8.05 uM through a voltage sensor-trapping mechanism. It increases muscle contraction in several assays (mouse phrenic nerve-diaphragm, toad heart, rat vas deferens) and is suggested to act both presynaptically and postsynaptically. The sequence is that of Delta-theraphotoxin-Cg1a 1 from Chilobrachys guangxiensis (Chinese earth tiger tarantula).